Consider the following 282-residue polypeptide: Elongation factor Ts (282 aa).

The involved in Mg(2+) ion dislocation from EF-Tu stretch occupies residues 79-82; sequence TDFV.

The protein belongs to the EF-Ts family.

It is found in the cytoplasm. Functionally, associates with the EF-Tu.GDP complex and induces the exchange of GDP to GTP. It remains bound to the aminoacyl-tRNA.EF-Tu.GTP complex up to the GTP hydrolysis stage on the ribosome. The sequence is that of Elongation factor Ts from Shewanella piezotolerans (strain WP3 / JCM 13877).